A 188-amino-acid polypeptide reads, in one-letter code: Elongation factor P (188 aa).

This sequence belongs to the elongation factor P family.

It localises to the cytoplasm. The protein operates within protein biosynthesis; polypeptide chain elongation. Involved in peptide bond synthesis. Stimulates efficient translation and peptide-bond synthesis on native or reconstituted 70S ribosomes in vitro. Probably functions indirectly by altering the affinity of the ribosome for aminoacyl-tRNA, thus increasing their reactivity as acceptors for peptidyl transferase. This is Elongation factor P from Cereibacter sphaeroides (strain KD131 / KCTC 12085) (Rhodobacter sphaeroides).